We begin with the raw amino-acid sequence, 572 residues long: Hemagglutinin-neuraminidase (572 aa).

Residues 1 to 31 are Intravirion-facing; that stretch reads MEYWKHTNHGKDAGNELETSMATHGNKLTNK. A helical transmembrane segment spans residues 32–52; it reads IIYILWTIILVLLSIVFIIVL. Over 53 to 572 the chain is Virion surface; sequence INSIKSEKAH…FKTEIPKSCS (520 aa). Disulfide bonds link Cys190-Cys214 and Cys256-Cys269. The tract at residues 252–257 is involved in neuraminidase activity; sequence NRKSCS. Asn308 and Asn351 each carry an N-linked (GlcNAc...) asparagine; by host glycan. 2 disulfides stabilise this stretch: Cys355–Cys469 and Cys463–Cys473. N-linked (GlcNAc...) asparagine; by host glycosylation is present at Asn523. A disulfide bridge links Cys535 with Cys544.

This sequence belongs to the paramyxoviruses hemagglutinin-neuraminidase family. As to quaternary structure, homotetramer; composed of disulfide-linked homodimers. Interacts with F protein trimer.

Its subcellular location is the virion membrane. The protein localises to the host cell membrane. The catalysed reaction is Hydrolysis of alpha-(2-&gt;3)-, alpha-(2-&gt;6)-, alpha-(2-&gt;8)- glycosidic linkages of terminal sialic acid residues in oligosaccharides, glycoproteins, glycolipids, colominic acid and synthetic substrates.. In terms of biological role, attaches the virus to sialic acid-containing cell receptors and thereby initiating infection. Binding of HN protein to the receptor induces a conformational change that allows the F protein to trigger virion/cell membranes fusion. Neuraminidase activity ensures the efficient spread of the virus by dissociating the mature virions from the neuraminic acid containing glycoproteins. This is Hemagglutinin-neuraminidase (HN) from Homo sapiens (Human).